Reading from the N-terminus, the 363-residue chain is 1-aminocyclopropane-1-carboxylate oxidase homolog (363 aa).

In terms of domain architecture, Fe2OG dioxygenase spans 212 to 312 (FHLFCSCNYY…MSITCFFGES (101 aa)). 3 residues coordinate Fe cation: histidine 236, aspartate 238, and histidine 292.

Belongs to the iron/ascorbate-dependent oxidoreductase family.

The chain is 1-aminocyclopropane-1-carboxylate oxidase homolog (ACO3) from Solanum lycopersicum (Tomato).